We begin with the raw amino-acid sequence, 365 residues long: MTRLKNDTLLRALLRQPTEYTPVWLMRQAGRYLSEYNQTRARAGNFLALCKNPDFATEVTMQPLARFPLDAAILFSDILTIPDAMGLGLYFAEGEGPRFERPLREEWEIRALTVPDPAVHLRYVMDAVSQIRKTLDNRVPLIGFSGSPFTLACYMVEGAGGTDFRQIKTMLYRRPDLLHHILDINAQAVTAYLNAQIESGAQAVMIFDTWGGALSHAAYQQFSLRYMTQVLAGLRRYQGAERIPSIVFTKGGGLWLESIADSGCDAVGLDWTVNIGDARRRVGHKVALQGNLDPAVLFAEPGVIAAEVEQILASFGEGSGHIFNLGHGISQFTPPENALTLVEAVHSLSRRFHRADAEGNNSFGS.

Residues 27 to 31 (RQAGR), aspartate 77, tyrosine 154, threonine 209, and histidine 327 contribute to the substrate site.

Belongs to the uroporphyrinogen decarboxylase family. In terms of assembly, homodimer.

Its subcellular location is the cytoplasm. The enzyme catalyses uroporphyrinogen III + 4 H(+) = coproporphyrinogen III + 4 CO2. It functions in the pathway porphyrin-containing compound metabolism; protoporphyrin-IX biosynthesis; coproporphyrinogen-III from 5-aminolevulinate: step 4/4. Its function is as follows. Catalyzes the decarboxylation of four acetate groups of uroporphyrinogen-III to yield coproporphyrinogen-III. This is Uroporphyrinogen decarboxylase from Nitrosospira multiformis (strain ATCC 25196 / NCIMB 11849 / C 71).